Here is a 159-residue protein sequence, read N- to C-terminus: MKFLVILTLCIAGAIAHCDKAPFIKASWNQVKHNEVDILYTVFKAYPEIQDRFPQFAGKDLEAIKETAEFAVHSTRIVSFMSEIVSLVGNPAVQSSIDLLLVKMANDHKARGVTKELFEKFNIAFMGYLKSHTTWDEKTENAWKVVGDEHHAIVYSILE.

The first 16 residues, 1-16 (MKFLVILTLCIAGAIA), serve as a signal peptide directing secretion. Positions 17-159 (HCDKAPFIKA…HHAIVYSILE (143 aa)) constitute a Globin domain. Heme b-binding residues include His73 and His108.

Belongs to the globin family.

The sequence is that of Globin CTT-W (CTT-W) from Chironomus thummi piger (Midge).